The primary structure comprises 95 residues: Aspartyl/glutamyl-tRNA(Asn/Gln) amidotransferase subunit C (95 aa).

The protein belongs to the GatC family. In terms of assembly, heterotrimer of A, B and C subunits.

The catalysed reaction is L-glutamyl-tRNA(Gln) + L-glutamine + ATP + H2O = L-glutaminyl-tRNA(Gln) + L-glutamate + ADP + phosphate + H(+). It catalyses the reaction L-aspartyl-tRNA(Asn) + L-glutamine + ATP + H2O = L-asparaginyl-tRNA(Asn) + L-glutamate + ADP + phosphate + 2 H(+). Allows the formation of correctly charged Asn-tRNA(Asn) or Gln-tRNA(Gln) through the transamidation of misacylated Asp-tRNA(Asn) or Glu-tRNA(Gln) in organisms which lack either or both of asparaginyl-tRNA or glutaminyl-tRNA synthetases. The reaction takes place in the presence of glutamine and ATP through an activated phospho-Asp-tRNA(Asn) or phospho-Glu-tRNA(Gln). In Chromohalobacter salexigens (strain ATCC BAA-138 / DSM 3043 / CIP 106854 / NCIMB 13768 / 1H11), this protein is Aspartyl/glutamyl-tRNA(Asn/Gln) amidotransferase subunit C.